The sequence spans 364 residues: MTTTELIPPTIQVDEEEEEACMFAMQLASASVLPMVLKSAIELDLLESIAKAGPGAYVSPSELAAKLPSSQPDTPVMLDRILRLLASYSVLKCKVQDLPQGGVERLYALAPVCKFLTKNSDGVSMAPLLLMNQDKILMESWYHLKDAVLDGGIPFNKAYGMTAFEYHGKDPRFNKVFNLGMSNHSTITMKKILQTYNGFAGLKTVVDVGGGTGATLNMIISKYPNIKGINFDLPHVVEDAPSYPGVEHVGGDMFVSVPEGDAIFMKWICHDWSDAHCLSFLKNCYKALPQNGKVILAECILPEAPDSKLTTKNVIHIDVIMLAHNPGGKERTEKEFEALGKMAGFKSFNKVCCAHNTWIMEFLK.

Asn-132 contacts bergaptol. Positions 209, 232, 252, 253, 265, and 266 each coordinate S-adenosyl-L-homocysteine. Bergaptol is bound at residue His-270. Residue His-270 is the Proton acceptor of the active site.

The protein belongs to the class I-like SAM-binding methyltransferase superfamily. Cation-independent O-methyltransferase family. COMT subfamily. Homodimer. As to expression, expressed ubiquitously.

It catalyses the reaction bergaptol + S-adenosyl-L-methionine = bergapten + S-adenosyl-L-homocysteine. The enzyme catalyses xanthotoxol + S-adenosyl-L-methionine = xanthotoxin + S-adenosyl-L-homocysteine + H(+). The catalysed reaction is esculetin + S-adenosyl-L-methionine = isoscopoletin + S-adenosyl-L-homocysteine + H(+). It carries out the reaction esculetin + S-adenosyl-L-methionine = scopoletin + S-adenosyl-L-homocysteine + H(+). Its pathway is aromatic compound metabolism. The protein operates within secondary metabolite biosynthesis. Its activity is regulated as follows. Inhibited by zinc Zn(2+), copper Cu(2+) and silver Ag(+) ions. Its function is as follows. O-methyltransferase involved in the biosynthesis of methoxylated coumarins natural products such as isoscopoletin, scopoletin, xanthotoxin and bergapten, photosensitizers used for medical purpose such as treating psoriasis and vitiligo or facilitating resistance to microbial infection and other stresses. Catalyzes the methylation of esculetin, bergaptol and xanthotoxol, but seems inactive on scopoletin and isoscopoletin. The protein is Esculetin O-methyltransferase of Kitagawia praeruptora (Peucedanum praeruptorum).